The following is a 157-amino-acid chain: 2-amino-4-hydroxy-6-hydroxymethyldihydropteridine pyrophosphokinase (157 aa).

The protein belongs to the HPPK family.

It carries out the reaction 6-hydroxymethyl-7,8-dihydropterin + ATP = (7,8-dihydropterin-6-yl)methyl diphosphate + AMP + H(+). It participates in cofactor biosynthesis; tetrahydrofolate biosynthesis; 2-amino-4-hydroxy-6-hydroxymethyl-7,8-dihydropteridine diphosphate from 7,8-dihydroneopterin triphosphate: step 4/4. Catalyzes the transfer of pyrophosphate from adenosine triphosphate (ATP) to 6-hydroxymethyl-7,8-dihydropterin, an enzymatic step in folate biosynthesis pathway. This Campylobacter jejuni subsp. jejuni serotype O:2 (strain ATCC 700819 / NCTC 11168) protein is 2-amino-4-hydroxy-6-hydroxymethyldihydropteridine pyrophosphokinase (folK).